The following is a 215-amino-acid chain: Disulfide-bond oxidoreductase YfcG (215 aa).

One can recognise a GST N-terminal domain in the interval 1–87 (MIDLYFAPTP…YLAEKTGLFL (87 aa)). Residues asparagine 11, glutamine 38, arginine 40, isoleucine 52, 71–72 (ES), and arginine 132 contribute to the glutathione site. A GST C-terminal domain is found at 90 to 215 (ETRERAATLQ…AQLGDERSDS (126 aa)).

This sequence belongs to the GST superfamily. Nu-class GSH transferase family. As to quaternary structure, homodimer.

Its function is as follows. Exhibits a very robust glutathione (GSH)-dependent disulfide-bond reductase activity toward the model substrate, 2-hydroxyethyl disulfide; the actual physiological substrates are not known. Also has a low GSH-dependent hydroperoxidase activity toward cumene hydroperoxide, but does not reduce H(2)O(2), tert-butyl hydroperoxide, benzyl peroxide, or lauroyl peroxide. Exhibits little or no GSH transferase activity with most typical electrophilic substrates, and has no detectable transferase activity using glutathionylspermidine (GspSH) as the nucleophilic substrate. Is involved in defense against oxidative stress, probably via its peroxidase activity. This chain is Disulfide-bond oxidoreductase YfcG (yfcG), found in Escherichia coli (strain K12).